A 163-amino-acid chain; its full sequence is Small ribosomal subunit protein uS9 (163 aa).

The interval 1–41 (MAENTNDSAVLETEEELTSYTTETNAGAGTGTSTIAPGYGT) is disordered. Low complexity predominate over residues 18–38 (TSYTTETNAGAGTGTSTIAPG).

Belongs to the universal ribosomal protein uS9 family.

This chain is Small ribosomal subunit protein uS9, found in Bifidobacterium adolescentis (strain ATCC 15703 / DSM 20083 / NCTC 11814 / E194a).